The following is a 142-amino-acid chain: Large ribosomal subunit protein uL13 (142 aa).

This sequence belongs to the universal ribosomal protein uL13 family. Part of the 50S ribosomal subunit.

This protein is one of the early assembly proteins of the 50S ribosomal subunit, although it is not seen to bind rRNA by itself. It is important during the early stages of 50S assembly. This Opitutus terrae (strain DSM 11246 / JCM 15787 / PB90-1) protein is Large ribosomal subunit protein uL13.